The primary structure comprises 85 residues: Transcription factor 4 (85 aa).

The bHLH domain maps to 7-60; that stretch reads ERRMANNARERLRVRDINEAFKELGRMVQLHLKSDKPQTKLLILHQAVAVILSL. A class A specific domain region spans residues 62–85; the sequence is QQVRERNLNPKAACLKRREEEKVS.

As to quaternary structure, efficient DNA binding requires dimerization with another bHLH protein. Forms homo- or heterooligomers with myogenin.

It is found in the nucleus. Its function is as follows. Transcription factor that binds to the immunoglobulin enhancer Mu-E5/KE5-motif. Involved in the initiation of neuronal differentiation. Binds to the E-box present in the somatostatin receptor 2 initiator element (SSTR2-INR) to activate transcription. In Gallus gallus (Chicken), this protein is Transcription factor 4 (TCF4).